A 361-amino-acid polypeptide reads, in one-letter code: MPHNTKSMDNTLNIKDNHVQIGGRKSKLAVVQSEIVKECIVEKFPELSCSVLALSTLGDKVQSKPLYSFGGKALWTKELEILLLEQVEEYPRLDLIVHSLKDIPTNLPEEFELGCILNREDARDALVMKSGSSYKSLADLPDGSLVGTSSVRRSSQLLKNHPKLRFDSVRGNLQTRLNKLDDENSPFECLLLASAGLIRIGLGDRITAHLDAPEMYYAVGQGALGIEIRKGDEKMLQLLKTIEDLPTTYCCLAERSLMRHLEGGCSVPIGVQSHYNESTNELSLKAIIVSPDGIHFVEDEYKGVVNNKDDADAIGIKVGDLLSAKGGREILNSINFERINLPPSSNTPTPQPITPITTNNS.

S-(dipyrrolylmethanemethyl)cysteine is present on C265. Residues 341 to 361 (LPPSSNTPTPQPITPITTNNS) are disordered.

The protein belongs to the HMBS family. Dipyrromethane is required as a cofactor.

It catalyses the reaction 4 porphobilinogen + H2O = hydroxymethylbilane + 4 NH4(+). It functions in the pathway porphyrin-containing compound metabolism; protoporphyrin-IX biosynthesis; coproporphyrinogen-III from 5-aminolevulinate: step 2/4. In terms of biological role, tetrapolymerization of the monopyrrole PBG into the hydroxymethylbilane pre-uroporphyrinogen in several discrete steps. This is Porphobilinogen deaminase (HEM3) from Debaryomyces hansenii (strain ATCC 36239 / CBS 767 / BCRC 21394 / JCM 1990 / NBRC 0083 / IGC 2968) (Yeast).